A 744-amino-acid chain; its full sequence is Vesicle-fusing ATPase (744 aa).

Residue Lys-105 is modified to N6-acetyllysine. Position 207 is a phosphoserine (Ser-207). Tyr-259 carries the phosphotyrosine modification. Residues 505–510 and 545–552 each bind ATP; these read NGIIKW and PHSGKTAL. Thr-550 provides a ligand contact to Mg(2+). A Phosphoserine; by CDK16 modification is found at Ser-569.

This sequence belongs to the AAA ATPase family. As to quaternary structure, homohexamer. Interacts with GABARAP and GABARAPL2. Interacts with GRIA2. Interacts with PLK2, leading to disrupt the interaction with GRIA2. Interacts with MUSK; may regulate MUSK endocytosis and activity. Interacts with CDK16. Requires Mg(2+) as cofactor. Post-translationally, phosphorylation at Ser-569 interferes with homohexamerization.

It localises to the cytoplasm. The catalysed reaction is ATP + H2O = ADP + phosphate + H(+). Functionally, required for vesicle-mediated transport. Catalyzes the fusion of transport vesicles within the Golgi cisternae. Is also required for transport from the endoplasmic reticulum to the Golgi stack. Seems to function as a fusion protein required for the delivery of cargo proteins to all compartments of the Golgi stack independent of vesicle origin. Interaction with AMPAR subunit GRIA2 leads to influence GRIA2 membrane cycling. In Cricetulus griseus (Chinese hamster), this protein is Vesicle-fusing ATPase (NSF).